We begin with the raw amino-acid sequence, 469 residues long: Citrate synthase, mitochondrial (469 aa).

A mitochondrion-targeting transit peptide spans 1 to 30 (MSFLSVSRLAPKLLNSKNATYFLVAARNAS). Residues His304 and His350 contribute to the active site. Arg359 lines the oxaloacetate pocket. Residue Asp405 is part of the active site. The oxaloacetate site is built by Arg431 and Arg451.

This sequence belongs to the citrate synthase family. In terms of assembly, homodimer.

The protein localises to the mitochondrion matrix. It catalyses the reaction oxaloacetate + acetyl-CoA + H2O = citrate + CoA + H(+). It functions in the pathway carbohydrate metabolism; tricarboxylic acid cycle; isocitrate from oxaloacetate: step 1/2. Its function is as follows. Key enzyme of the Krebs tricarboxylic acid cycle which catalyzes the synthesis of citrate from acetyl coenzyme A and oxaloacetate. The sequence is that of Citrate synthase, mitochondrial (cs) from Thunnus albacares (Yellowfin tuna).